Reading from the N-terminus, the 330-residue chain is 5'-AMP-activated protein kinase subunit gamma-1 (330 aa).

The segment at 1–21 (MESVAAESSPALENEHFQETP) is disordered. 3 CBS domains span residues 42-102 (PTSS…KSAL), 124-186 (SFKP…PKPE), and 197-259 (IGTY…NLDV). ADP-binding positions include R69, 84–89 (MLTITD), V129, 150–151 (HR), and K169. Residues R69, 84-89 (MLTITD), V129, H150, 150-151 (HR), K169, T199, A204, 225-226 (SA), and 241-244 (SKFD) contribute to the AMP site. ATP contacts are provided by residues R69, 84-89 (MLTITD), V129, 150-151 (HR), R151, and K169. Residues 137–158 (LFDAVSSLIRNKIHRLPVIDPE) carry the AMPK pseudosubstrate motif. 241–244 (SKFD) serves as a coordination point for ADP. 241–244 (SKFD) lines the ATP pocket. S260 is subject to Phosphoserine; by ULK1. Phosphothreonine; by ULK1 is present on T262. An ADP-binding site is contributed by R268. R268 serves as a coordination point for AMP. R268 contributes to the ATP binding site. S269 carries the phosphoserine; by ULK1 modification. The CBS 4 domain maps to 271–328 (YFEGVLKCYLHETLETIINRLVEAEVHRLVVVDEHDVVKGIVSLSDILQALVLTGGEK). ADP contacts are provided by residues L276 and 297–298 (HR). AMP is bound by residues L276, H297, 297–298 (HR), and 313–316 (SLSD). ATP is bound by residues L276 and 297-298 (HR).

Belongs to the 5'-AMP-activated protein kinase gamma subunit family. AMPK is a heterotrimer of an alpha catalytic subunit (PRKAA1 or PRKAA2), a beta (PRKAB1 or PRKAB2) and a gamma non-catalytic subunits (PRKAG1, PRKAG2 or PRKAG3). Interacts with FNIP1 and FNIP2. Post-translationally, phosphorylated by ULK1 and ULK2; leading to negatively regulate AMPK activity and suggesting the existence of a regulatory feedback loop between ULK1, ULK2 and AMPK. Glycosylated; O-GlcNAcylated by OGT, promoting the AMP-activated protein kinase (AMPK) activity.

Its function is as follows. AMP/ATP-binding subunit of AMP-activated protein kinase (AMPK), an energy sensor protein kinase that plays a key role in regulating cellular energy metabolism. In response to reduction of intracellular ATP levels, AMPK activates energy-producing pathways and inhibits energy-consuming processes: inhibits protein, carbohydrate and lipid biosynthesis, as well as cell growth and proliferation. AMPK acts via direct phosphorylation of metabolic enzymes, and by longer-term effects via phosphorylation of transcription regulators. Also acts as a regulator of cellular polarity by remodeling the actin cytoskeleton; probably by indirectly activating myosin. Gamma non-catalytic subunit mediates binding to AMP, ADP and ATP, leading to activate or inhibit AMPK: AMP-binding results in allosteric activation of alpha catalytic subunit (PRKAA1 or PRKAA2) both by inducing phosphorylation and preventing dephosphorylation of catalytic subunits. ADP also stimulates phosphorylation, without stimulating already phosphorylated catalytic subunit. ATP promotes dephosphorylation of catalytic subunit, rendering the AMPK enzyme inactive. The protein is 5'-AMP-activated protein kinase subunit gamma-1 (Prkag1) of Mus musculus (Mouse).